Consider the following 150-residue polypeptide: MCWLRAWSHILLPVFLSVALIQLIFNLSDHKTKTHHHWKRKIEAKYVEKECAQKETCPVCTRDKRCIWCREEKVCKKYCFPYSDCKFNSIFWANCNVDLFGIVMLILIVILALAFLWYCLAYYFYMQQHMALYARHGQVPVYNWDAPGDW.

A signal peptide spans 1 to 19; it reads MCWLRAWSHILLPVFLSVA. Residues 20 to 98 are Extracellular-facing; the sequence is LIQLIFNLSD…SIFWANCNVD (79 aa). N-linked (GlcNAc...) asparagine glycosylation is present at asparagine 26. Residues 99 to 119 traverse the membrane as a helical segment; sequence LFGIVMLILIVILALAFLWYC. The Cytoplasmic segment spans residues 120–150; it reads LAYYFYMQQHMALYARHGQVPVYNWDAPGDW.

The protein localises to the membrane. The chain is PTTG1IP family member 2 from Mus musculus (Mouse).